Here is a 342-residue protein sequence, read N- to C-terminus: Large ribosomal subunit protein uL3 (342 aa).

This sequence belongs to the universal ribosomal protein uL3 family. Part of the 50S ribosomal subunit. Forms a cluster with proteins L14 and L24e.

In terms of biological role, one of the primary rRNA binding proteins, it binds directly near the 3'-end of the 23S rRNA, where it nucleates assembly of the 50S subunit. This chain is Large ribosomal subunit protein uL3, found in Pyrobaculum islandicum (strain DSM 4184 / JCM 9189 / GEO3).